The primary structure comprises 440 residues: Ribosomal protein uS12 methylthiotransferase RimO (440 aa).

Residues Met-1–Gly-117 enclose the MTTase N-terminal domain. The [4Fe-4S] cluster site is built by Cys-10, Cys-46, Cys-80, Cys-154, Cys-158, and Cys-161. The Radical SAM core domain occupies Thr-140 to Glu-370. The region spanning Glu-373–Glu-440 is the TRAM domain.

Belongs to the methylthiotransferase family. RimO subfamily. The cofactor is [4Fe-4S] cluster.

The protein localises to the cytoplasm. The enzyme catalyses L-aspartate(89)-[ribosomal protein uS12]-hydrogen + (sulfur carrier)-SH + AH2 + 2 S-adenosyl-L-methionine = 3-methylsulfanyl-L-aspartate(89)-[ribosomal protein uS12]-hydrogen + (sulfur carrier)-H + 5'-deoxyadenosine + L-methionine + A + S-adenosyl-L-homocysteine + 2 H(+). Its function is as follows. Catalyzes the methylthiolation of an aspartic acid residue of ribosomal protein uS12. The chain is Ribosomal protein uS12 methylthiotransferase RimO from Lachnoclostridium phytofermentans (strain ATCC 700394 / DSM 18823 / ISDg) (Clostridium phytofermentans).